The primary structure comprises 151 residues: Ribosome maturation factor RimP (151 aa).

Belongs to the RimP family.

It localises to the cytoplasm. In terms of biological role, required for maturation of 30S ribosomal subunits. The chain is Ribosome maturation factor RimP from Caldanaerobacter subterraneus subsp. tengcongensis (strain DSM 15242 / JCM 11007 / NBRC 100824 / MB4) (Thermoanaerobacter tengcongensis).